The sequence spans 176 residues: Lipocalin-1 (176 aa).

The signal sequence occupies residues 1–19; sequence MMRALLLAIGLGLVAALQA. Cys-80 and Cys-171 are joined by a disulfide.

The protein belongs to the calycin superfamily. Lipocalin family. Predominantly monomer. May form homodimer. Interacts with LMBR1L; this interaction mediates the endocytosis of LCN1.

Its subcellular location is the secreted. Its function is as follows. Could play a role in taste reception. Could be necessary for the concentration and delivery of sapid molecules in the gustatory system. Can bind various ligands, with chemical structures ranging from lipids and retinoids to the macrocyclic antibiotic rifampicin and even to microbial siderophores. Exhibits an extremely wide ligand pocket. The protein is Lipocalin-1 (LCN1) of Sus scrofa (Pig).